The following is a 595-amino-acid chain: uncharacterized protein (595 aa).

3 disordered regions span residues 50-159 (VNPS…KTKK), 398-430 (TYPT…PPSL), and 450-595 (VTEG…SLDK). Positions 83-122 (SNKSSALKKSNKSSNKSSNKSSNKSSNKSSNKSSNKSSNK) are enriched in low complexity. A compositionally biased stretch (basic and acidic residues) spans 123 to 132 (FPDKSDKSDS). Positions 137-146 (DNSDDSDDSS) are enriched in acidic residues. The segment covering 398 to 409 (TYPTTPLFSEPT) has biased composition (low complexity). A compositionally biased stretch (pro residues) spans 410–420 (IPKPPQQPTTE). Residues 421-430 (PPSGFKPPSL) are compositionally biased toward low complexity. Positions 454-463 (KVVESDDHTS) are enriched in basic and acidic residues. The span at 467–476 (IPPPPPPPPS) shows a compositional bias: pro residues. The span at 477–529 (ISSDNSSPNKSVKSSTKSSTKSSTKSSTKSSTKSSTKSPSKTPVKSPIKSSSK) shows a compositional bias: low complexity. Over residues 530–542 (LSDKKSPTKKIES) the composition is skewed to basic and acidic residues. Residues 544 to 553 (GESDSESDSE) show a composition bias toward acidic residues. Over residues 559 to 570 (TKKSTNKIKKIT) the composition is skewed to basic residues. Residues 571–580 (NNKLENSNTK) are compositionally biased toward low complexity. Over residues 581 to 595 (NNKKFSKKKTISLDK) the composition is skewed to basic residues.

This is an uncharacterized protein from Acanthamoeba polyphaga mimivirus (APMV).